The primary structure comprises 192 residues: Probable apo-citrate lyase phosphoribosyl-dephospho-CoA transferase (192 aa).

Belongs to the CitX family.

It carries out the reaction apo-[citrate lyase ACP] + 2'-(5''-triphospho-alpha-D-ribosyl)-3'-dephospho-CoA = holo-[citrate lyase ACP] + diphosphate. In terms of biological role, transfers 2-(5''-triphosphoribosyl)-3'-dephosphocoenzyme-A on a serine residue to the apo-acyl carrier protein (gamma chain) of the citrate lyase to yield holo-acyl carrier protein. The protein is Probable apo-citrate lyase phosphoribosyl-dephospho-CoA transferase of Streptococcus pyogenes serotype M3 (strain ATCC BAA-595 / MGAS315).